A 293-amino-acid chain; its full sequence is Formamidopyrimidine-DNA glycosylase (293 aa).

Proline 2 serves as the catalytic Schiff-base intermediate with DNA. Glutamate 3 (proton donor) is an active-site residue. Lysine 58 serves as the catalytic Proton donor; for beta-elimination activity. DNA is bound by residues histidine 104, arginine 127, and arginine 170. An FPG-type zinc finger spans residues 257–293 (SVYGREGKPCRNPACGGTVERVVQSGRSTFFCASCQT). The active-site Proton donor; for delta-elimination activity is the arginine 283.

It belongs to the FPG family. Monomer. Requires Zn(2+) as cofactor.

The catalysed reaction is Hydrolysis of DNA containing ring-opened 7-methylguanine residues, releasing 2,6-diamino-4-hydroxy-5-(N-methyl)formamidopyrimidine.. It catalyses the reaction 2'-deoxyribonucleotide-(2'-deoxyribose 5'-phosphate)-2'-deoxyribonucleotide-DNA = a 3'-end 2'-deoxyribonucleotide-(2,3-dehydro-2,3-deoxyribose 5'-phosphate)-DNA + a 5'-end 5'-phospho-2'-deoxyribonucleoside-DNA + H(+). Its function is as follows. Involved in base excision repair of DNA damaged by oxidation or by mutagenic agents. Acts as a DNA glycosylase that recognizes and removes damaged bases. Has a preference for oxidized purines, such as 7,8-dihydro-8-oxoguanine (8-oxoG). Has AP (apurinic/apyrimidinic) lyase activity and introduces nicks in the DNA strand. Cleaves the DNA backbone by beta-delta elimination to generate a single-strand break at the site of the removed base with both 3'- and 5'-phosphates. The protein is Formamidopyrimidine-DNA glycosylase of Brucella ovis (strain ATCC 25840 / 63/290 / NCTC 10512).